The chain runs to 85 residues: Putative membrane protein insertion efficiency factor (85 aa).

It belongs to the UPF0161 family.

It is found in the cell inner membrane. Could be involved in insertion of integral membrane proteins into the membrane. In Enterobacter sp. (strain 638), this protein is Putative membrane protein insertion efficiency factor.